A 248-amino-acid chain; its full sequence is PF03932 family protein CutC (248 aa).

The protein belongs to the CutC family. In terms of assembly, homodimer.

Its subcellular location is the cytoplasm. The protein is PF03932 family protein CutC of Salmonella newport (strain SL254).